A 68-amino-acid polypeptide reads, in one-letter code: DNA-directed RNA polymerase subunit omega (68 aa).

The protein belongs to the RNA polymerase subunit omega family. As to quaternary structure, the RNAP catalytic core consists of 2 alpha, 1 beta, 1 beta' and 1 omega subunit. When a sigma factor is associated with the core the holoenzyme is formed, which can initiate transcription.

The catalysed reaction is RNA(n) + a ribonucleoside 5'-triphosphate = RNA(n+1) + diphosphate. Promotes RNA polymerase assembly. Latches the N- and C-terminal regions of the beta' subunit thereby facilitating its interaction with the beta and alpha subunits. The chain is DNA-directed RNA polymerase subunit omega from Brevibacillus brevis (strain 47 / JCM 6285 / NBRC 100599).